The primary structure comprises 835 residues: Serine/threonine-protein kinase TNNI3K (835 aa).

Residues serine 21–serine 51 are a coiled coil. ANK repeat units follow at residues asparagine 66–arginine 96, asparagine 100–glutamine 129, glycine 133–isoleucine 162, valine 166–valine 195, valine 199–valine 228, glutamate 234–proline 263, tyrosine 269–leucine 298, phenylalanine 304–histidine 335, aspartate 339–leucine 368, and aspartate 381–glutamate 410. One can recognise a Protein kinase domain in the interval isoleucine 463 to leucine 723. ATP is bound by residues isoleucine 469–valine 477 and lysine 490. Aspartate 588 (proton acceptor) is an active-site residue. A compositionally biased stretch (low complexity) spans alanine 732–serine 746. The disordered stretch occupies residues alanine 732–asparagine 751.

The protein belongs to the protein kinase superfamily. TKL Ser/Thr protein kinase family. MAP kinase kinase kinase subfamily. In terms of assembly, interacts with TNNI3, ACTC1, ACTA1, MYBPC3, AIP, FABP3 and HADHB. The cofactor is Mg(2+). In terms of processing, autophosphorylated. In terms of tissue distribution, highly expressed in both adult and fetal heart.

Its subcellular location is the nucleus. It localises to the cytoplasm. It carries out the reaction L-seryl-[protein] + ATP = O-phospho-L-seryl-[protein] + ADP + H(+). It catalyses the reaction L-threonyl-[protein] + ATP = O-phospho-L-threonyl-[protein] + ADP + H(+). May play a role in cardiac physiology. The polypeptide is Serine/threonine-protein kinase TNNI3K (Homo sapiens (Human)).